The primary structure comprises 185 residues: Crossover junction endodeoxyribonuclease RuvC (185 aa).

Catalysis depends on residues aspartate 7, glutamate 68, and aspartate 141. Mg(2+)-binding residues include aspartate 7, glutamate 68, and aspartate 141.

The protein belongs to the RuvC family. In terms of assembly, homodimer which binds Holliday junction (HJ) DNA. The HJ becomes 2-fold symmetrical on binding to RuvC with unstacked arms; it has a different conformation from HJ DNA in complex with RuvA. In the full resolvosome a probable DNA-RuvA(4)-RuvB(12)-RuvC(2) complex forms which resolves the HJ. Mg(2+) is required as a cofactor.

The protein localises to the cytoplasm. It catalyses the reaction Endonucleolytic cleavage at a junction such as a reciprocal single-stranded crossover between two homologous DNA duplexes (Holliday junction).. Functionally, the RuvA-RuvB-RuvC complex processes Holliday junction (HJ) DNA during genetic recombination and DNA repair. Endonuclease that resolves HJ intermediates. Cleaves cruciform DNA by making single-stranded nicks across the HJ at symmetrical positions within the homologous arms, yielding a 5'-phosphate and a 3'-hydroxyl group; requires a central core of homology in the junction. The consensus cleavage sequence is 5'-(A/T)TT(C/G)-3'. Cleavage occurs on the 3'-side of the TT dinucleotide at the point of strand exchange. HJ branch migration catalyzed by RuvA-RuvB allows RuvC to scan DNA until it finds its consensus sequence, where it cleaves and resolves the cruciform DNA. The sequence is that of Crossover junction endodeoxyribonuclease RuvC from Mycolicibacterium smegmatis (strain ATCC 700084 / mc(2)155) (Mycobacterium smegmatis).